Reading from the N-terminus, the 258-residue chain is tRNA pseudouridine synthase A (258 aa).

The active-site Nucleophile is D52. Substrate is bound at residue Y110.

The protein belongs to the tRNA pseudouridine synthase TruA family. In terms of assembly, homodimer.

It carries out the reaction uridine(38/39/40) in tRNA = pseudouridine(38/39/40) in tRNA. Functionally, formation of pseudouridine at positions 38, 39 and 40 in the anticodon stem and loop of transfer RNAs. This Francisella tularensis subsp. tularensis (strain FSC 198) protein is tRNA pseudouridine synthase A.